The primary structure comprises 488 residues: Annexin A7 (488 aa).

Positions 1–18 are enriched in pro residues; sequence MSYPGYPPTGYPPFPGYP. Disordered stretches follow at residues 1 to 49 and 71 to 150; these read MSYP…YPQV and GYPG…NTES. The segment at 1 to 143 is repeat-rich region; the sequence is MSYPGYPPTG…QYPGGQPTYP (143 aa). A 3 X 5 AA tandem repeats of G-Y-P-P-X region spans residues 5–20; it reads GYPPTGYPPFPGYPPA. Residues 89-102 are compositionally biased toward gly residues; sequence PGQGFGVPPGGAGF. Annexin repeat units lie at residues 185–256, 257–328, 340–412, and 416–487; these read FDAM…ALFM, PPTY…SMCQ, QMAQ…TILQ, and NRPA…AIVG. K233 is modified (N6-acetyllysine).

It belongs to the annexin family. As to quaternary structure, interacts with PDCD6.

In terms of biological role, calcium/phospholipid-binding protein which promotes membrane fusion and is involved in exocytosis. The sequence is that of Annexin A7 (ANXA7) from Macaca fascicularis (Crab-eating macaque).